An 85-amino-acid polypeptide reads, in one-letter code: Putative membrane protein insertion efficiency factor (85 aa).

The protein belongs to the UPF0161 family.

It localises to the cell inner membrane. In terms of biological role, could be involved in insertion of integral membrane proteins into the membrane. This Tolumonas auensis (strain DSM 9187 / NBRC 110442 / TA 4) protein is Putative membrane protein insertion efficiency factor.